The chain runs to 124 residues: Secreted RxLR effector protein 49 (124 aa).

Residues 1–22 (MIRRSPLVAVILFVAITHVVLA) form the signal peptide. The RxLR signature appears at 57–60 (RSLR).

This sequence belongs to the RxLR effector family.

The protein resides in the secreted. It localises to the host cytoplasm. Its subcellular location is the host nucleus. Its function is as follows. Effector that acts as a broad suppressor of cell death to interrupt plant immunity. Inhibits cell death induced by cell death-inducing proteins, including the PAMP elicitor INF1 from P.infestans. This is Secreted RxLR effector protein 49 from Plasmopara viticola (Downy mildew of grapevine).